A 344-amino-acid chain; its full sequence is Meiotic recombination protein DMC1 homolog (344 aa).

The tract at residues 1–22 is disordered; it reads MMASLKAEETSQMQLVEREEND. An ATP-binding site is contributed by 133-140; sequence GEFRSGKT. Arginine 235 contributes to the dsDNA binding site. The ssDNA site is built by arginine 235, phenylalanine 238, arginine 241, arginine 247, and arginine 315. DsDNA is bound by residues arginine 241 and arginine 247.

It belongs to the RecA family. DMC1 subfamily. As to quaternary structure, double stacked ring-shaped homooctamer. Interacts with BRCA2A and BRCA2B. Expressed in mitotic and/or meiotic tissues. Expressed in roots, leaves and anthers and carpels of young fower buds.

It is found in the nucleus. May participate in meiotic recombination, specifically in homologous strand assimilation, which is required for the resolution of meiotic double-strand breaks. Mediates interhomolog recombination during meiosis. This chain is Meiotic recombination protein DMC1 homolog, found in Arabidopsis thaliana (Mouse-ear cress).